The sequence spans 91 residues: MPRPTGKKFDKRRQQQNPLFKRKKFCRFTAANVDHIDYKDLETLKDFIGENGKITPARLTGTKSHYQRQLDTAIKRARFLALVPYTDQHKA.

Belongs to the bacterial ribosomal protein bS18 family. Part of the 30S ribosomal subunit. Forms a tight heterodimer with protein bS6.

In terms of biological role, binds as a heterodimer with protein bS6 to the central domain of the 16S rRNA, where it helps stabilize the platform of the 30S subunit. The protein is Small ribosomal subunit protein bS18 of Paraburkholderia phytofirmans (strain DSM 17436 / LMG 22146 / PsJN) (Burkholderia phytofirmans).